Reading from the N-terminus, the 594-residue chain is Probable translation initiation factor IF-2 (594 aa).

Residues tyrosine 5–valine 224 form the tr-type G domain. Residues glycine 14–threonine 21 are G1. Glycine 14–threonine 21 lines the GTP pocket. Residues methionine 39 to histidine 43 form a G2 region. The tract at residues aspartate 80–glycine 83 is G3. GTP contacts are provided by residues aspartate 80 to histidine 84 and asparagine 134 to aspartate 137. Positions asparagine 134 to aspartate 137 are G4. A G5 region spans residues serine 202 to valine 204.

This sequence belongs to the TRAFAC class translation factor GTPase superfamily. Classic translation factor GTPase family. IF-2 subfamily.

In terms of biological role, function in general translation initiation by promoting the binding of the formylmethionine-tRNA to ribosomes. Seems to function along with eIF-2. The chain is Probable translation initiation factor IF-2 from Caldivirga maquilingensis (strain ATCC 700844 / DSM 13496 / JCM 10307 / IC-167).